Reading from the N-terminus, the 610-residue chain is Glutamine--fructose-6-phosphate aminotransferase [isomerizing] (610 aa).

C2 (nucleophile; for GATase activity) is an active-site residue. Residues 2–219 enclose the Glutamine amidotransferase type-2 domain; the sequence is CGIVGAVAQR…EGDVAEITRR (218 aa). SIS domains lie at 287 to 427 and 459 to 600; these read ADEL…LRGM and LAEG…VDQP. The active-site For Fru-6P isomerization activity is the K605.

As to quaternary structure, homodimer.

It localises to the cytoplasm. It carries out the reaction D-fructose 6-phosphate + L-glutamine = D-glucosamine 6-phosphate + L-glutamate. In terms of biological role, catalyzes the first step in hexosamine metabolism, converting fructose-6P into glucosamine-6P using glutamine as a nitrogen source. The sequence is that of Glutamine--fructose-6-phosphate aminotransferase [isomerizing] from Pectobacterium atrosepticum (strain SCRI 1043 / ATCC BAA-672) (Erwinia carotovora subsp. atroseptica).